The sequence spans 155 residues: Ribosomal RNA large subunit methyltransferase H (155 aa).

S-adenosyl-L-methionine contacts are provided by residues Leu72, Gly103, and 122–127; that span reads LSALTL.

The protein belongs to the RNA methyltransferase RlmH family. In terms of assembly, homodimer.

It is found in the cytoplasm. It catalyses the reaction pseudouridine(1915) in 23S rRNA + S-adenosyl-L-methionine = N(3)-methylpseudouridine(1915) in 23S rRNA + S-adenosyl-L-homocysteine + H(+). Functionally, specifically methylates the pseudouridine at position 1915 (m3Psi1915) in 23S rRNA. This is Ribosomal RNA large subunit methyltransferase H from Citrobacter koseri (strain ATCC BAA-895 / CDC 4225-83 / SGSC4696).